Consider the following 307-residue polypeptide: D-alanine--D-alanine ligase (307 aa).

Residues 101-301 (KTVMRAAGVS…FGELVRWMVE (201 aa)) enclose the ATP-grasp domain. 127-182 (PLTPPYVVKPIAEGSSMGVIIVRDERSHPPQILASDEWVYGEEVLAETYVAGRELT) is a binding site for ATP. Mg(2+) contacts are provided by Asp251, Glu268, and Asn270.

It belongs to the D-alanine--D-alanine ligase family. It depends on Mg(2+) as a cofactor. The cofactor is Mn(2+).

The protein resides in the cytoplasm. The enzyme catalyses 2 D-alanine + ATP = D-alanyl-D-alanine + ADP + phosphate + H(+). It participates in cell wall biogenesis; peptidoglycan biosynthesis. In terms of biological role, cell wall formation. In Methylorubrum extorquens (strain CM4 / NCIMB 13688) (Methylobacterium extorquens), this protein is D-alanine--D-alanine ligase.